A 173-amino-acid chain; its full sequence is Small ribosomal subunit protein uS5 (173 aa).

Positions 17–80 (WQERVIQIRR…ADGKKQLIEV (64 aa)) constitute an S5 DRBM domain.

It belongs to the universal ribosomal protein uS5 family. Part of the 30S ribosomal subunit. Contacts proteins S4 and S8.

Functionally, with S4 and S12 plays an important role in translational accuracy. Its function is as follows. Located at the back of the 30S subunit body where it stabilizes the conformation of the head with respect to the body. This chain is Small ribosomal subunit protein uS5, found in Microcystis aeruginosa (strain NIES-843 / IAM M-2473).